We begin with the raw amino-acid sequence, 982 residues long: Probable DNA-directed RNA polymerase (982 aa).

The protein belongs to the RNA polymerase beta chain family.

The catalysed reaction is RNA(n) + a ribonucleoside 5'-triphosphate = RNA(n+1) + diphosphate. Its function is as follows. The presence of the two linear plasmids, termed pGKL1 and pGKL2, in strains of Kluyveromyces lactis confers the killer phenotype to the host cell, by promoting the secretion of a toxin able to inhibit the growth of sensitive strains. The protein is Probable DNA-directed RNA polymerase of Kluyveromyces lactis (strain ATCC 8585 / CBS 2359 / DSM 70799 / NBRC 1267 / NRRL Y-1140 / WM37) (Yeast).